Consider the following 380-residue polypeptide: Cytochrome b (380 aa).

4 helical membrane passes run 33–53 (FGSL…FLAM), 77–98 (WLIR…YMHI), 113–133 (WNIG…GYVL), and 178–198 (FFAF…IHLL). Histidine 83 and histidine 97 together coordinate heme b. The heme b site is built by histidine 182 and histidine 196. Histidine 201 provides a ligand contact to a ubiquinone. Transmembrane regions (helical) follow at residues 226-246 (YKDL…ALFS), 288-308 (LGGV…PLLH), 320-340 (ITQF…WIGG), and 347-367 (FIII…VLFP).

Belongs to the cytochrome b family. The cytochrome bc1 complex contains 3 respiratory subunits (MT-CYB, CYC1 and UQCRFS1), 2 core proteins (UQCRC1 and UQCRC2) and probably 6 low-molecular weight proteins. It depends on heme b as a cofactor.

The protein localises to the mitochondrion inner membrane. In terms of biological role, component of the ubiquinol-cytochrome c reductase complex (complex III or cytochrome b-c1 complex) that is part of the mitochondrial respiratory chain. The b-c1 complex mediates electron transfer from ubiquinol to cytochrome c. Contributes to the generation of a proton gradient across the mitochondrial membrane that is then used for ATP synthesis. The protein is Cytochrome b (mt-cyb) of Carassius auratus (Goldfish).